The primary structure comprises 511 residues: Cobyric acid synthase (511 aa).

The region spanning 251–443 (LLDIAIICLP…IHGIFDNDIF (193 aa)) is the GATase cobBQ-type domain. Residue Cys332 is the Nucleophile of the active site. His435 is an active-site residue.

This sequence belongs to the CobB/CobQ family. CobQ subfamily.

The protein operates within cofactor biosynthesis; adenosylcobalamin biosynthesis. Functionally, catalyzes amidations at positions B, D, E, and G on adenosylcobyrinic A,C-diamide. NH(2) groups are provided by glutamine, and one molecule of ATP is hydrogenolyzed for each amidation. The sequence is that of Cobyric acid synthase from Listeria welshimeri serovar 6b (strain ATCC 35897 / DSM 20650 / CCUG 15529 / CIP 8149 / NCTC 11857 / SLCC 5334 / V8).